The sequence spans 726 residues: E3 SUMO-protein ligase SIZ2 (726 aa).

Residues 43-77 (MEQLKVLELKQICKSLDLSITGKKAVLQDRIKQFL) enclose the SAP domain. The 153-residue stretch at 139-291 (TALPPYSQQQ…SISCFIVEVF (153 aa)) folds into the PINIT domain. The segment at 323–408 (DDDDIITTST…IQNCNEDVEQ (86 aa)) adopts an SP-RING-type zinc-finger fold. Positions 354, 356, 377, and 380 each coordinate Zn(2+). The interval 507–533 (PSESEGSSDYNPNHTSTPKGSPTMDQD) is disordered. Polar residues predominate over residues 510–533 (SEGSSDYNPNHTSTPKGSPTMDQD).

The protein belongs to the PIAS family. As to quaternary structure, interacts with CDC12. Autosumoylated upon ethanol stress.

Its subcellular location is the nucleus. It functions in the pathway protein modification; protein sumoylation. Its function is as follows. May act as an E3 ligase mediating SUMO/Smt3 attachment to septins. May be involved in chromosome maintenance. The sequence is that of E3 SUMO-protein ligase SIZ2 (NFI1) from Saccharomyces cerevisiae (strain ATCC 204508 / S288c) (Baker's yeast).